A 328-amino-acid chain; its full sequence is Phosphate acyltransferase (328 aa).

Belongs to the PlsX family. Homodimer. Probably interacts with PlsY.

It localises to the cytoplasm. The catalysed reaction is a fatty acyl-[ACP] + phosphate = an acyl phosphate + holo-[ACP]. It functions in the pathway lipid metabolism; phospholipid metabolism. Functionally, catalyzes the reversible formation of acyl-phosphate (acyl-PO(4)) from acyl-[acyl-carrier-protein] (acyl-ACP). This enzyme utilizes acyl-ACP as fatty acyl donor, but not acyl-CoA. This Mycoplasma genitalium (strain ATCC 33530 / DSM 19775 / NCTC 10195 / G37) (Mycoplasmoides genitalium) protein is Phosphate acyltransferase.